The primary structure comprises 411 residues: Adenylosuccinate synthetase (411 aa).

Residues 11–17 and 39–41 each bind GTP; these read GDEGKGK and GHT. The Proton acceptor role is filled by Asp12. Mg(2+) is bound by residues Asp12 and Gly39. IMP-binding positions include 12–15, 37–40, Thr121, Arg135, Gln215, Thr230, and Arg294; these read DEGK and NAGH. Residue His40 is the Proton donor of the active site. Substrate is bound at residue 290–296; the sequence is TTTKRPR. Residues Arg296, 322-324, and 400-402 contribute to the GTP site; these read KLD and STS.

The protein belongs to the adenylosuccinate synthetase family. In terms of assembly, homodimer. Mg(2+) serves as cofactor.

It localises to the cytoplasm. The enzyme catalyses IMP + L-aspartate + GTP = N(6)-(1,2-dicarboxyethyl)-AMP + GDP + phosphate + 2 H(+). It functions in the pathway purine metabolism; AMP biosynthesis via de novo pathway; AMP from IMP: step 1/2. Functionally, plays an important role in the de novo pathway of purine nucleotide biosynthesis. Catalyzes the first committed step in the biosynthesis of AMP from IMP. This chain is Adenylosuccinate synthetase, found in Helicobacter pylori (strain G27).